The sequence spans 2645 residues: Non-reducing polyketide synthase AC (2645 aa).

Positions 73–2366 are N-terminal acylcarrier protein transacylase domain (SAT); sequence ALQNLNEWLK…TDIVHNAWPM (2294 aa). His260 serves as the catalytic Proton donor/acceptor; for transacylase activity. Positions 416-834 constitute a Ketosynthase family 3 (KS3) domain; sequence DDKIAVIGMA…GSNSSLVVTE (419 aa). Active-site for beta-ketoacyl synthase activity residues include Cys583, His718, and His757. A malonyl-CoA:ACP transacylase (MAT) domain region spans residues 943–1252; the sequence is CFGGQISTYI…HAVSITTDKS (310 aa). The N-terminal hotdog fold stretch occupies residues 1324-1457; sequence SKGFTSFAGY…GVCSFCSATD (134 aa). The PKS/mFAS DH domain occupies 1324–1637; it reads SKGFTSFAGY…YNKVPLPVMR (314 aa). The interval 1330 to 1641 is product template (PT) domain; that stretch reads FAGYIDGNQR…PLPVMRGILG (312 aa). His1359 acts as the Proton acceptor; for dehydratase activity in catalysis. Residues 1487 to 1637 form a C-terminal hotdog fold region; that stretch reads NIMQGTANIY…YNKVPLPVMR (151 aa). Asp1542 acts as the Proton donor; for dehydratase activity in catalysis. The segment covering 1684 to 1696 has biased composition (polar residues); sequence NGTTGTENPQIKS. Residues 1684–1716 form a disordered region; it reads NGTTGTENPQIKSKTNKVKKVPTRKSGGSDLET. Residues 1697-1706 show a composition bias toward basic residues; it reads KTNKVKKVPT. Positions 1711 to 1788 constitute a Carrier domain; that stretch reads GSDLETPAKT…SLVKYIREIR (78 aa). Ser1748 is modified (O-(pantetheine 4'-phosphoryl)serine). A compositionally biased stretch (acidic residues) spans 1794–1805; it reads QNVDDSESESEE. Positions 1794–1816 are disordered; sequence QNVDDSESESEELQQQATPIDSA. Catalysis depends on Tyr2009, which acts as the For methyltransferase activity. A methyltransferase (CMeT) domain region spans residues 2023–2197; it reads EVFVEKIGSS…SVGYGHVDWT (175 aa). Positions 2269–2573 are NADPH-binding (R) domain; that stretch reads CVLITGATGS…NIIPFYDWVQ (305 aa).

The protein operates within mycotoxin biosynthesis. Functionally, non-reducing polyketide synthase; part of the gene cluster that mediates the biosynthesis of the selective antifungal agent ascochitine, an o-quinone methide that plays a possible protective role against other microbial competitors in nature and is considered to be important for pathogenicity of legume-associated Didymella species. The pathway probably begins with the synthesis of a keto-aldehyde intermediate by the ascochitine non-reducing polyketide synthase pksAC from successive condensations of 4 malonyl-CoA units, presumably with a simple acetyl-CoA starter unit. Release of the keto-aldehyde intermediate is consistent with the presence of the C-terminal reductive release domain. The HR-PKS (orf7) probably makes a diketide starter unit which is passed to the non-reducing polyketide synthase pksAC for further extension, producing ascochital and ascochitine. The aldehyde dehydrogenase (orf1), the 2-oxoglutarate-dependent dioxygenase (orf3) and the dehydrogenase (orf9) are probably involved in subsequent oxidations of methyl groups to the carboxylic acid of the heterocyclic ring. The ascochitine gene cluster also includes a gene encoding a short peptide (orf2) that is often found in secondary metabolite gene clusters and which function has still to be determined. The sequence is that of Non-reducing polyketide synthase AC from Didymella fabae (Leaf and pod spot disease fungus).